The following is a 424-amino-acid chain: Riboflavin biosynthesis protein RibBA (424 aa).

The interval 1-204 is DHBP synthase; it reads MTRFDSIERA…IADLIAWRRK (204 aa). Residues 28–29, Asp-33, 141–145, and Glu-165 each bind D-ribulose 5-phosphate; these read RE and RPGHT. Glu-29 is a binding site for Mg(2+). Position 144 (His-144) interacts with Mg(2+). The GTP cyclohydrolase II stretch occupies residues 205-424; the sequence is HEKHVLRIAE…QNTAQPGTAL (220 aa). 259-263 contacts GTP; sequence RVHSE. Zn(2+) contacts are provided by Cys-264, Cys-275, and Cys-277. GTP is bound by residues Gln-280, 303–305, and Thr-325; that span reads EGR. Asp-337 (proton acceptor; for GTP cyclohydrolase activity) is an active-site residue. Residue Arg-339 is the Nucleophile; for GTP cyclohydrolase activity of the active site. 2 residues coordinate GTP: Thr-360 and Lys-365.

The protein in the N-terminal section; belongs to the DHBP synthase family. It in the C-terminal section; belongs to the GTP cyclohydrolase II family. It depends on Mg(2+) as a cofactor. Requires Mn(2+) as cofactor. The cofactor is Zn(2+).

The catalysed reaction is D-ribulose 5-phosphate = (2S)-2-hydroxy-3-oxobutyl phosphate + formate + H(+). It carries out the reaction GTP + 4 H2O = 2,5-diamino-6-hydroxy-4-(5-phosphoribosylamino)-pyrimidine + formate + 2 phosphate + 3 H(+). The protein operates within cofactor biosynthesis; riboflavin biosynthesis; 2-hydroxy-3-oxobutyl phosphate from D-ribulose 5-phosphate: step 1/1. It participates in cofactor biosynthesis; riboflavin biosynthesis; 5-amino-6-(D-ribitylamino)uracil from GTP: step 1/4. In terms of biological role, catalyzes the conversion of D-ribulose 5-phosphate to formate and 3,4-dihydroxy-2-butanone 4-phosphate. Functionally, catalyzes the conversion of GTP to 2,5-diamino-6-ribosylamino-4(3H)-pyrimidinone 5'-phosphate (DARP), formate and pyrophosphate. This chain is Riboflavin biosynthesis protein RibBA, found in Rhodococcus erythropolis (strain PR4 / NBRC 100887).